We begin with the raw amino-acid sequence, 228 residues long: UPF0502 protein AZOSEA09860 (228 aa).

Belongs to the UPF0502 family.

The protein is UPF0502 protein AZOSEA09860 of Aromatoleum aromaticum (strain DSM 19018 / LMG 30748 / EbN1) (Azoarcus sp. (strain EbN1)).